Reading from the N-terminus, the 390-residue chain is Guanine nucleotide exchange factor for Rab-3A (390 aa).

A disordered region spans residues 1 to 60 (MWSGQPHPDEGHPPPLEAVPVPWKSVGPCKSHRESLGGLPETPAGEEAQGEEGPAATQLD). A compositionally biased stretch (low complexity) spans 40 to 58 (PETPAGEEAQGEEGPAATQ). The stretch at 73–161 (EKGSEFLKEE…AEVTALKTLV (89 aa)) forms a coiled coil. The segment at 166–194 (PASPNRELHPQLLSPTKAGPRKGHLRHKS) is disordered. Phosphoserine is present on residues S168 and S179. Over residues 184–194 (GPRKGHLRHKS) the composition is skewed to basic residues.

The protein belongs to the SEC2 family. In terms of assembly, interacts with RAB3A and IHPK1 through the coiled-coil domain. This interaction is competitive. IHPK1 kinase activity is not required for this interaction.

In terms of biological role, guanine nucleotide exchange factor (GEF) which may activate RAB3A, a GTPase that regulates synaptic vesicle exocytosis. Promotes the exchange of GDP to GTP, converting inactive GDP-bound Rab proteins into their active GTP-bound form. May also activate RAB8A and RAB8B. This is Guanine nucleotide exchange factor for Rab-3A (RAB3IL1) from Bos taurus (Bovine).